We begin with the raw amino-acid sequence, 585 residues long: Aspartate--tRNA ligase (585 aa).

E173 lines the L-aspartate pocket. Positions 197-200 are aspartate; sequence QTLK. Residue R219 participates in L-aspartate binding. ATP-binding positions include 219–221 and Q228; that span reads RDE. An L-aspartate-binding site is contributed by H446. Residue E480 coordinates ATP. Position 487 (R487) interacts with L-aspartate. 532 to 535 lines the ATP pocket; the sequence is GLDR.

Belongs to the class-II aminoacyl-tRNA synthetase family. Type 1 subfamily. As to quaternary structure, homodimer.

The protein resides in the cytoplasm. It carries out the reaction tRNA(Asp) + L-aspartate + ATP = L-aspartyl-tRNA(Asp) + AMP + diphosphate. Functionally, catalyzes the attachment of L-aspartate to tRNA(Asp) in a two-step reaction: L-aspartate is first activated by ATP to form Asp-AMP and then transferred to the acceptor end of tRNA(Asp). The sequence is that of Aspartate--tRNA ligase from Bacteroides fragilis (strain ATCC 25285 / DSM 2151 / CCUG 4856 / JCM 11019 / LMG 10263 / NCTC 9343 / Onslow / VPI 2553 / EN-2).